A 314-amino-acid chain; its full sequence is Ribosomal protein L11 methyltransferase (314 aa).

S-adenosyl-L-methionine is bound by residues threonine 163, glycine 184, aspartate 206, and asparagine 248.

Belongs to the methyltransferase superfamily. PrmA family.

The protein localises to the cytoplasm. The catalysed reaction is L-lysyl-[protein] + 3 S-adenosyl-L-methionine = N(6),N(6),N(6)-trimethyl-L-lysyl-[protein] + 3 S-adenosyl-L-homocysteine + 3 H(+). Methylates ribosomal protein L11. In Lactobacillus delbrueckii subsp. bulgaricus (strain ATCC BAA-365 / Lb-18), this protein is Ribosomal protein L11 methyltransferase.